An 811-amino-acid polypeptide reads, in one-letter code: MSFFKNQLIHRARPGYRIIPESTVTEDIELGTIGEETPLLSEGVITAVEEGAIGLPEVAIGVAGAIGTHAHEWWRDRYAFKSVLTGNYTDLKGNPLKPRNAIPEKIKQLGKKIFQGDFNRAFPDNLKLETEKEKADLLRYYNHNRRLAGLSEAYPQGKGYAYAKSQKVLEAERRGLTVPGYKYLGPGNSLNRGQPINQIDEDAKEHDEAYDKVKTSQEVSRADNTFVNKALDHVVNAINFKETPGNAFGAAIGAIGIGTKQAIEKYSGVIYPSVSGMSRHINPRYINQPNWKDYIAEGNSKNWVGYSNLPDDFFQEETLSDSPMQEATKRKADSPAVETPAKKGTTGVNVNSQSTDPQNPSSSGATTDLDVTMAMSLPGTGSGTSSGGGNTQGQDVYIIPRPFSNFGKKLSTYTKSHKFMIFGLANNVIGPTGTGTTAVNRLLTTCLAEIPWQKLPLYMNQSEFDLLPPGSRVVECNVKVIFRTNRIAFETSSTVTKQATLNQISNVQTAIGLNKLGWGINRAFTAFQSDQPMIPTATTAPKYEPVTGDTGYRGMIADYYGADSTNDTAFGNAGNYPHHQVSSFTFLQNYYCMYQQTNQGTGGWPCLAEHLQQFDSKTVNNQCLIDVTYKPKMGLIKSPLNYKIIGQPTVKGTISVGDNLVNMRGAVVTNPPEATQNVAESTHNLTRNFPADLFNIYSDIEKSQVLHKGPWGHENPQIQPSVHIGIQAVPALTTGALLINSSPLNSWTDSMGYIDVMSSCTVMEAQPTHFPFSTEANTNPGNTIYRINLTPNSLTSAFNGLYGNGATLGNV.

A disordered region spans residues 321 to 367 (DSPMQEATKRKADSPAVETPAKKGTTGVNVNSQSTDPQNPSSSGATT). Residues 346 to 366 (TGVNVNSQSTDPQNPSSSGAT) are compositionally biased toward polar residues.

The protein localises to the virion. In terms of biological role, capsid protein self-assembles to form an icosahedral capsid with a T=1 symmetry, about 22 nm in diameter, and consisting of 60 copies of size variants of the capsid proteins, which differ in the N-terminushe capsid encapsulates the genomic ssDNA. Capsid proteins are responsible for the attachment to host cell receptors. This attachment induces virion internalization predominantly through clathrin-dependent endocytosis. In Galleria mellonella densovirus (GmDNV), this protein is Capsid protein VP1 (VP).